The following is a 401-amino-acid chain: Argininosuccinate synthase (401 aa).

Residue 9-17 (AYSGGLDTS) coordinates ATP. Tyrosine 86 lines the L-citrulline pocket. ATP is bound at residue glycine 116. Residues threonine 118, asparagine 122, and aspartate 123 each contribute to the L-aspartate site. Residue asparagine 122 participates in L-citrulline binding. 5 residues coordinate L-citrulline: arginine 126, serine 174, serine 183, glutamate 259, and tyrosine 271.

It belongs to the argininosuccinate synthase family. Type 1 subfamily. Homotetramer.

It localises to the cytoplasm. It catalyses the reaction L-citrulline + L-aspartate + ATP = 2-(N(omega)-L-arginino)succinate + AMP + diphosphate + H(+). Its pathway is amino-acid biosynthesis; L-arginine biosynthesis; L-arginine from L-ornithine and carbamoyl phosphate: step 2/3. This chain is Argininosuccinate synthase, found in Bacillus cereus (strain Q1).